The chain runs to 437 residues: Enolase (437 aa).

Residue glutamine 162 coordinates (2R)-2-phosphoglycerate. The active-site Proton donor is the glutamate 204. Positions 251, 297, and 324 each coordinate Mg(2+). Lysine 349, arginine 378, serine 379, and lysine 400 together coordinate (2R)-2-phosphoglycerate. The active-site Proton acceptor is the lysine 349.

Belongs to the enolase family. It depends on Mg(2+) as a cofactor.

It localises to the cytoplasm. It is found in the secreted. Its subcellular location is the cell surface. It carries out the reaction (2R)-2-phosphoglycerate = phosphoenolpyruvate + H2O. It participates in carbohydrate degradation; glycolysis; pyruvate from D-glyceraldehyde 3-phosphate: step 4/5. Catalyzes the reversible conversion of 2-phosphoglycerate (2-PG) into phosphoenolpyruvate (PEP). It is essential for the degradation of carbohydrates via glycolysis. The sequence is that of Enolase from Chlorobium luteolum (strain DSM 273 / BCRC 81028 / 2530) (Pelodictyon luteolum).